A 78-amino-acid polypeptide reads, in one-letter code: Short neurotoxin SNTX14 (78 aa).

Positions Met1–Thr21 are cleaved as a signal peptide. Disulfide bonds link Cys24–Cys40, Cys33–Cys58, Cys62–Cys70, and Cys71–Cys76.

This sequence belongs to the three-finger toxin family. Short-chain subfamily. In terms of tissue distribution, expressed by the venom gland.

It localises to the secreted. In terms of biological role, this three-finger toxin binds and inhibits the nicotinic acetylcholine receptor (nAChR). This chain is Short neurotoxin SNTX14, found in Ophiophagus hannah (King cobra).